The following is a 279-amino-acid chain: Undecaprenyl-diphosphatase (279 aa).

8 consecutive transmembrane segments (helical) span residues 2 to 22 (LFIE…TEWL), 44 to 64 (AFME…VIVI), 85 to 105 (WQLW…AVPL), 113 to 133 (FNHM…FLWI), 163 to 183 (VLSI…AIIL), 188 to 208 (TVAA…YSGL), 225 to 245 (LLVL…VIKL), and 255 to 275 (FTVF…YSVF).

This sequence belongs to the UppP family.

It is found in the cell membrane. It catalyses the reaction di-trans,octa-cis-undecaprenyl diphosphate + H2O = di-trans,octa-cis-undecaprenyl phosphate + phosphate + H(+). Its function is as follows. Catalyzes the dephosphorylation of undecaprenyl diphosphate (UPP). Confers resistance to bacitracin. This Streptococcus equi subsp. zooepidemicus (strain H70) protein is Undecaprenyl-diphosphatase.